The sequence spans 166 residues: Sec-independent protein translocase protein TatB (166 aa).

Residues 2-22 (FDGIGFMELLLIGVLGLVVLG) traverse the membrane as a helical segment. The tract at residues 69-166 (SKGLSNLSPE…DTRSNPKANG (98 aa)) is disordered. Composition is skewed to polar residues over residues 88–97 (QAAQSVNRPY) and 112–132 (QIHS…SQAN). The segment covering 133–153 (PTATVEASPTSASPATPSEPS) has biased composition (low complexity). A compositionally biased stretch (polar residues) spans 155–166 (GADTRSNPKANG).

The protein belongs to the TatB family. The Tat system comprises two distinct complexes: a TatABC complex, containing multiple copies of TatA, TatB and TatC subunits, and a separate TatA complex, containing only TatA subunits. Substrates initially bind to the TatABC complex, which probably triggers association of the separate TatA complex to form the active translocon.

The protein resides in the cell inner membrane. Part of the twin-arginine translocation (Tat) system that transports large folded proteins containing a characteristic twin-arginine motif in their signal peptide across membranes. Together with TatC, TatB is part of a receptor directly interacting with Tat signal peptides. TatB may form an oligomeric binding site that transiently accommodates folded Tat precursor proteins before their translocation. This chain is Sec-independent protein translocase protein TatB, found in Shewanella baltica (strain OS223).